The primary structure comprises 71 residues: Ceratotoxin-A (71 aa).

The N-terminal stretch at 1 to 23 (MANLKAVFLICIVAFIALQCVVA) is a signal peptide. 2 consecutive propeptides follow at residues 24–35 (EPAAEDSVVVKR) and 65–71 (VAAGLVG).

Homomer of four to six subunits.

It localises to the secreted. Female-specific peptides with potent activity against Gram-positive and Gram-negative bacteria. They have as well hemolytic activity. In Ceratitis capitata (Mediterranean fruit fly), this protein is Ceratotoxin-A (CTXA1).